The primary structure comprises 446 residues: N-succinylarginine dihydrolase (446 aa).

Substrate-binding positions include 19–28 (AGLSFGNEAS), Asn-110, and 137–138 (HR). Glu-174 is a catalytic residue. Residue Arg-213 coordinates substrate. His-249 is a catalytic residue. The substrate site is built by Asp-251 and Asn-364. The Nucleophile role is filled by Cys-370.

Belongs to the succinylarginine dihydrolase family. As to quaternary structure, homodimer.

The enzyme catalyses N(2)-succinyl-L-arginine + 2 H2O + 2 H(+) = N(2)-succinyl-L-ornithine + 2 NH4(+) + CO2. Its pathway is amino-acid degradation; L-arginine degradation via AST pathway; L-glutamate and succinate from L-arginine: step 2/5. Functionally, catalyzes the hydrolysis of N(2)-succinylarginine into N(2)-succinylornithine, ammonia and CO(2). The chain is N-succinylarginine dihydrolase from Acinetobacter baylyi (strain ATCC 33305 / BD413 / ADP1).